Here is a 482-residue protein sequence, read N- to C-terminus: Glutamate--tRNA ligase (482 aa).

Positions 9–19 (PSPTGYLHIGG) match the 'HIGH' region motif. The 'KMSKS' region motif lies at 252-256 (KLSKR). Lys-255 contributes to the ATP binding site.

This sequence belongs to the class-I aminoacyl-tRNA synthetase family. Glutamate--tRNA ligase type 1 subfamily. Monomer.

The protein resides in the cytoplasm. It carries out the reaction tRNA(Glu) + L-glutamate + ATP = L-glutamyl-tRNA(Glu) + AMP + diphosphate. Functionally, catalyzes the attachment of glutamate to tRNA(Glu) in a two-step reaction: glutamate is first activated by ATP to form Glu-AMP and then transferred to the acceptor end of tRNA(Glu). This is Glutamate--tRNA ligase from Ureaplasma parvum serovar 3 (strain ATCC 27815 / 27 / NCTC 11736).